We begin with the raw amino-acid sequence, 126 residues long: Small ribosomal subunit protein uS12c (126 aa).

Belongs to the universal ribosomal protein uS12 family. Part of the 30S ribosomal subunit.

The protein localises to the plastid. Its subcellular location is the chloroplast. In terms of biological role, with S4 and S5 plays an important role in translational accuracy. Located at the interface of the 30S and 50S subunits. The polypeptide is Small ribosomal subunit protein uS12c (rps12) (Trieres chinensis (Marine centric diatom)).